Here is a 270-residue protein sequence, read N- to C-terminus: tRNA pseudouridine synthase A (270 aa).

The Nucleophile role is filled by D60. The tract at residues 107-111 is RNA binding; the sequence is FHARF. Y118 serves as a coordination point for substrate. The interval 168–172 is interaction with tRNA; it reads QCQSR.

It belongs to the tRNA pseudouridine synthase TruA family. Homodimer.

It carries out the reaction uridine(38/39/40) in tRNA = pseudouridine(38/39/40) in tRNA. In terms of biological role, formation of pseudouridine at positions 38, 39 and 40 in the anticodon stem and loop of transfer RNAs. The chain is tRNA pseudouridine synthase A from Escherichia fergusonii (strain ATCC 35469 / DSM 13698 / CCUG 18766 / IAM 14443 / JCM 21226 / LMG 7866 / NBRC 102419 / NCTC 12128 / CDC 0568-73).